The sequence spans 294 residues: DEP domain-containing protein 4 (294 aa).

In terms of domain architecture, DEP spans 71 to 162 (LQAQVEIKRR…SNISLYRFLG (92 aa)).

The sequence is that of DEP domain-containing protein 4 (DEPDC4) from Homo sapiens (Human).